Here is a 366-residue protein sequence, read N- to C-terminus: Aminomethyltransferase (366 aa).

Belongs to the GcvT family. In terms of assembly, the glycine cleavage system is composed of four proteins: P, T, L and H.

The enzyme catalyses N(6)-[(R)-S(8)-aminomethyldihydrolipoyl]-L-lysyl-[protein] + (6S)-5,6,7,8-tetrahydrofolate = N(6)-[(R)-dihydrolipoyl]-L-lysyl-[protein] + (6R)-5,10-methylene-5,6,7,8-tetrahydrofolate + NH4(+). Its function is as follows. The glycine cleavage system catalyzes the degradation of glycine. This Bacillus cereus (strain 03BB102) protein is Aminomethyltransferase.